The sequence spans 80 residues: Cell division protein ZapB (80 aa).

Residues 3-80 (FEVLEKLEAK…SLLGKMEDVE (78 aa)) adopt a coiled-coil conformation.

It belongs to the ZapB family. Homodimer. The ends of the coiled-coil dimer bind to each other, forming polymers. Interacts with FtsZ.

The protein localises to the cytoplasm. Functionally, non-essential, abundant cell division factor that is required for proper Z-ring formation. It is recruited early to the divisome by direct interaction with FtsZ, stimulating Z-ring assembly and thereby promoting cell division earlier in the cell cycle. Its recruitment to the Z-ring requires functional FtsA or ZipA. The polypeptide is Cell division protein ZapB (Vibrio cholerae serotype O1 (strain ATCC 39541 / Classical Ogawa 395 / O395)).